A 475-amino-acid chain; its full sequence is Pentatricopeptide repeat-containing protein At1g29710, mitochondrial (475 aa).

The N-terminal 37 residues, 1–37 (MVRLWCGKLRLWKPYLALATQSRNSWFCSGGGAPSHH), are a transit peptide targeting the mitochondrion. 6 PPR repeats span residues 83 to 117 (AQNV…GYAM), 118 to 148 (DLIR…IIAL), 153 to 183 (DVGA…MPEW), 184 to 218 (NSGT…GNKP), 219 to 254 (NGEI…GIVP), and 255 to 285 (SMEH…MPME). The interval 350–380 (YFYSTFRPVDSSHPQMNIIYETLMSLRSQLK) is type E(+) motif. Residues 381 to 475 (EMGYVPDTRY…NGVCRCNNLW (95 aa)) are type DYW motif.

Belongs to the PPR family. PCMP-H subfamily.

The protein resides in the mitochondrion. This chain is Pentatricopeptide repeat-containing protein At1g29710, mitochondrial (PCMP-H67), found in Arabidopsis thaliana (Mouse-ear cress).